The following is a 702-amino-acid chain: Arginine decarboxylase 1, chloroplastic (702 aa).

Residues 1–52 (MPALAFVDTPIDTFSSIFTPSSVSTAVVDGSCHWSPSLSSSLYRIDGWGAPY) constitute a chloroplast transit peptide. At lysine 136 the chain carries N6-(pyridoxal phosphate)lysine. Pyridoxal 5'-phosphate-binding positions include serine 288, glycine 325, and 374–377 (ESGR). Residue 320–330 (IDIGGGLGIDY) coordinates substrate. 436-437 (YV) serves as a coordination point for substrate. Cysteine 524 acts as the Proton donor; shared with dimeric partner in catalysis. Residue aspartate 525 participates in substrate binding. Position 565 (tyrosine 565) interacts with pyridoxal 5'-phosphate.

The protein belongs to the Orn/Lys/Arg decarboxylase class-II family. SpeA subfamily. In terms of assembly, homodimer. Only the dimer is catalytically active, as the active sites are constructed of residues from both monomers. May form a head-to-tail homodimer. Homodimer and heterodimer with ADC2. Pyridoxal 5'-phosphate is required as a cofactor. The cofactor is Mg(2+).

Its subcellular location is the plastid. The protein resides in the chloroplast. It localises to the cytoplasm. It is found in the cytosol. It carries out the reaction L-arginine + H(+) = agmatine + CO2. It functions in the pathway amine and polyamine biosynthesis; agmatine biosynthesis; agmatine from L-arginine: step 1/1. Required for the biosynthesis of putrescine. Catalyzes the first step of polyamine (PA) biosynthesis to produce putrescine from arginine. Is a minor contributor to basal arginine decarboxylase (ADC) activity and putrescine biosynthesis. Accumulation of putrescine plays a positive role in freezing tolerance. Production of polyamines is essential for normal seed development. Controls PA homeostasis which is crucial for normal plant growth and development. This is Arginine decarboxylase 1, chloroplastic from Arabidopsis thaliana (Mouse-ear cress).